A 581-amino-acid polypeptide reads, in one-letter code: Threonine--tRNA ligase (581 aa).

The segment at 185 to 478 is catalytic; it reads DHRKLGKELD…LVEHYGGAFP (294 aa). Zn(2+) contacts are provided by cysteine 278, histidine 329, and histidine 455.

The protein belongs to the class-II aminoacyl-tRNA synthetase family. As to quaternary structure, homodimer. Zn(2+) serves as cofactor.

It is found in the cytoplasm. The catalysed reaction is tRNA(Thr) + L-threonine + ATP = L-threonyl-tRNA(Thr) + AMP + diphosphate + H(+). Its function is as follows. Catalyzes the attachment of threonine to tRNA(Thr) in a two-step reaction: L-threonine is first activated by ATP to form Thr-AMP and then transferred to the acceptor end of tRNA(Thr). Also edits incorrectly charged L-seryl-tRNA(Thr). The chain is Threonine--tRNA ligase from Borreliella burgdorferi (strain ATCC 35210 / DSM 4680 / CIP 102532 / B31) (Borrelia burgdorferi).